Consider the following 102-residue polypeptide: Ribonuclease P protein component 1 (102 aa).

The protein belongs to the eukaryotic/archaeal RNase P protein component 1 family. As to quaternary structure, consists of a catalytic RNA component and at least 4-5 protein subunits.

It localises to the cytoplasm. The catalysed reaction is Endonucleolytic cleavage of RNA, removing 5'-extranucleotides from tRNA precursor.. Its function is as follows. Part of ribonuclease P, a protein complex that generates mature tRNA molecules by cleaving their 5'-ends. In Archaeoglobus fulgidus (strain ATCC 49558 / DSM 4304 / JCM 9628 / NBRC 100126 / VC-16), this protein is Ribonuclease P protein component 1.